A 194-amino-acid polypeptide reads, in one-letter code: Peptidyl-tRNA hydrolase (194 aa).

Position 17 (tyrosine 17) interacts with tRNA. Residue histidine 22 is the Proton acceptor of the active site. 3 residues coordinate tRNA: phenylalanine 68, asparagine 70, and asparagine 116.

Belongs to the PTH family. Monomer.

It is found in the cytoplasm. The catalysed reaction is an N-acyl-L-alpha-aminoacyl-tRNA + H2O = an N-acyl-L-amino acid + a tRNA + H(+). Hydrolyzes ribosome-free peptidyl-tRNAs (with 1 or more amino acids incorporated), which drop off the ribosome during protein synthesis, or as a result of ribosome stalling. In terms of biological role, catalyzes the release of premature peptidyl moieties from peptidyl-tRNA molecules trapped in stalled 50S ribosomal subunits, and thus maintains levels of free tRNAs and 50S ribosomes. The chain is Peptidyl-tRNA hydrolase from Mannheimia succiniciproducens (strain KCTC 0769BP / MBEL55E).